The sequence spans 429 residues: Histidine--tRNA ligase (429 aa).

This sequence belongs to the class-II aminoacyl-tRNA synthetase family. As to quaternary structure, homodimer.

Its subcellular location is the cytoplasm. It carries out the reaction tRNA(His) + L-histidine + ATP = L-histidyl-tRNA(His) + AMP + diphosphate + H(+). This is Histidine--tRNA ligase from Acidovorax ebreus (strain TPSY) (Diaphorobacter sp. (strain TPSY)).